The following is a 141-amino-acid chain: Nucleoside diphosphate kinase (141 aa).

6 residues coordinate ATP: Lys-11, Phe-59, Arg-87, Thr-93, Arg-104, and Asn-114. His-117 functions as the Pros-phosphohistidine intermediate in the catalytic mechanism.

Belongs to the NDK family. As to quaternary structure, homotetramer. It depends on Mg(2+) as a cofactor.

The protein resides in the cytoplasm. It carries out the reaction a 2'-deoxyribonucleoside 5'-diphosphate + ATP = a 2'-deoxyribonucleoside 5'-triphosphate + ADP. The catalysed reaction is a ribonucleoside 5'-diphosphate + ATP = a ribonucleoside 5'-triphosphate + ADP. In terms of biological role, major role in the synthesis of nucleoside triphosphates other than ATP. The ATP gamma phosphate is transferred to the NDP beta phosphate via a ping-pong mechanism, using a phosphorylated active-site intermediate. In Pseudomonas fluorescens (strain ATCC BAA-477 / NRRL B-23932 / Pf-5), this protein is Nucleoside diphosphate kinase.